A 367-amino-acid chain; its full sequence is Histidinol-phosphate aminotransferase (367 aa).

Lys230 is modified (N6-(pyridoxal phosphate)lysine).

It belongs to the class-II pyridoxal-phosphate-dependent aminotransferase family. Histidinol-phosphate aminotransferase subfamily. As to quaternary structure, homodimer. The cofactor is pyridoxal 5'-phosphate.

The enzyme catalyses L-histidinol phosphate + 2-oxoglutarate = 3-(imidazol-4-yl)-2-oxopropyl phosphate + L-glutamate. The protein operates within amino-acid biosynthesis; L-histidine biosynthesis; L-histidine from 5-phospho-alpha-D-ribose 1-diphosphate: step 7/9. This chain is Histidinol-phosphate aminotransferase, found in Thermobifida fusca (strain YX).